We begin with the raw amino-acid sequence, 2197 residues long: uncharacterized protein (2197 aa).

Residue S2 is modified to N-acetylserine. One copy of the HEAT repeat lies at 2159-2195; it reads TIPFLAELLEDVELSVKSLAQDIIKQMEEMSGESLAE.

It belongs to the HEATR1/UTP10 family.

It localises to the nucleus. The protein localises to the nucleolus. Its function is as follows. Involved in nucleolar processing of pre-18S ribosomal RNA. Involved in ribosome biosynthesis. This is an uncharacterized protein from Arabidopsis thaliana (Mouse-ear cress).